The following is a 254-amino-acid chain: ATP-dependent L-serine kinase SbnI (254 aa).

The active site involves E20. Residue S33 participates in ADP binding. I57 contacts O-phospho-L-serine. D58, G59, H61, and R62 together coordinate ADP. O-phospho-L-serine-binding residues include G59 and H61. O-phospho-L-serine is bound by residues W98 and R229.

Forms dimers and tetramers in solution. Predominantly forms dimers. Dimerization/oligomerization is not essential for kinase activity.

The catalysed reaction is L-serine + ATP = O-phospho-L-serine + ADP + H(+). It participates in siderophore biosynthesis. Binds heme and heme binding inhibits DNA binding. Functionally, free serine kinase that uses ATP to phosphorylate L-serine to yield O-phospho-L-serine and ADP. O-phospho-L-serine serves as a substrate for SbnA and is a precursor for staphyloferrin B biosynthesis. Is also a DNA-binding regulatory protein that senses heme to control gene expression for siderophore biosynthesis. Binds to DNA within the sbnC coding region and is required for expression of genes in the sbn operon from sbnD onward. The chain is ATP-dependent L-serine kinase SbnI from Staphylococcus aureus (strain NCTC 8325 / PS 47).